We begin with the raw amino-acid sequence, 219 residues long: Inner membrane protein YghB (219 aa).

Residues 1–17 (MAVIQDIIAALWQHDFA) are Cytoplasmic-facing. A helical transmembrane segment spans residues 18 to 38 (ALANPHVVSVVYFVMFATLFL). At 39 to 67 (ENGLLPASFLPGDSLLLLAGALIAQDVMH) the chain is on the periplasmic side. Residues 68-88 (FLPTIGILTAAASLGCWLSYI) form a helical membrane-spanning segment. Residues 89–160 (QGRWLGNTRT…RRFQFFNWLS (72 aa)) lie on the Cytoplasmic side of the membrane. The helical transmembrane segment at 161-181 (GLLWVTVVTSFGYALSMIPFV) threads the bilayer. Topologically, residues 182 to 191 (KRHEDQVMTF) are periplasmic. Residues 192 to 212 (LMILPVALLVAGLLGTLVVVI) form a helical membrane-spanning segment. The Cytoplasmic segment spans residues 213 to 219 (KKKYCNA).

This sequence belongs to the DedA family.

It is found in the cell inner membrane. In Salmonella typhimurium (strain LT2 / SGSC1412 / ATCC 700720), this protein is Inner membrane protein YghB (yghB).